The following is a 160-amino-acid chain: Small ribosomal subunit protein uS19v (160 aa).

It belongs to the universal ribosomal protein uS19 family.

The protein resides in the cytoplasm. The protein is Small ribosomal subunit protein uS19v (RPS15F) of Arabidopsis thaliana (Mouse-ear cress).